Consider the following 276-residue polypeptide: MAVLLSILSSSFLLLLAASSSSTPRASACERCVRNGKAAYSPSLSPLPPGGGGGCGYGAMAMEMELNGGFLAAGGPRQHRGGLGCGRCFQMRCRNAEVCSNAGVRVVLTDFHRSNSTDFLLGGPAFAGLAKPGMAHKLKKLDALSVEYRRIPCDYKDKNLSILVEEQSKRPNNLVIKFLYQGGQTDILAVDVAQVGSSDWRFMTRVYGPVWSIDRAPNGPLQFRAVVTGGYDGKWVWADREVLPANWQPGQVYDTGARIADVARESCLDCATLDWK.

The first 28 residues, 1–28 (MAVLLSILSSSFLLLLAASSSSTPRASA), serve as a signal peptide directing secretion. The Expansin-like EG45 domain occupies 52–158 (GGGCGYGAMA…RRIPCDYKDK (107 aa)). Residues asparagine 115 and asparagine 159 are each glycosylated (N-linked (GlcNAc...) asparagine). The 84-residue stretch at 172 to 255 (NNLVIKFLYQ…NWQPGQVYDT (84 aa)) folds into the Expansin-like CBD domain.

Belongs to the expansin family. Expansin-like A subfamily.

Its subcellular location is the secreted. The chain is Expansin-like A3 (EXLA3) from Oryza sativa subsp. japonica (Rice).